Here is a 485-residue protein sequence, read N- to C-terminus: Catalase isozyme 1 (485 aa).

Catalysis depends on residues histidine 58 and asparagine 131. Position 341 (tyrosine 341) interacts with heme.

Belongs to the catalase family. In terms of assembly, homotetramer. Requires heme as cofactor.

The protein resides in the peroxisome. It carries out the reaction 2 H2O2 = O2 + 2 H2O. Its function is as follows. Occurs in almost all aerobically respiring organisms and serves to protect cells from the toxic effects of hydrogen peroxide. This chain is Catalase isozyme 1 (CAT1), found in Nicotiana plumbaginifolia (Leadwort-leaved tobacco).